Reading from the N-terminus, the 271-residue chain is Structure-specific endonuclease subunit slx1 (271 aa).

The region spanning 5 to 87 is the GIY-YIG domain; it reads NFYCCYLLKS…QNLGISRYTK (83 aa). The segment at 180–231 adopts an SLX1-type zinc-finger fold; sequence CNLCYECIESDELRANCPFTDCNSINHLTCLASSFLTEECQVLPIEGMCTKC.

Belongs to the SLX1 family. As to quaternary structure, forms a heterodimer with slx4. Requires Mg(2+) as cofactor. It depends on Mn(2+) as a cofactor.

The protein localises to the nucleus. The protein resides in the nucleolus. Catalytic subunit of the slx1-slx4 structure-specific endonuclease that resolves DNA secondary structures generated during DNA repair and recombination. Has endonuclease activity towards branched DNA substrates, introducing single-strand cuts in duplex DNA close to junctions with ss-DNA. Has a preference for stem-loop (SL) and splayed arm Y structures. Introduces a single-strand cut in duplex DNA on the 3' side of a double-strand/single-strand junction with respect to the single-strand moving 3' to 5' away from the junction. Plays a critical role in maintaining the integrity of the ribosomal DNA (rDNA) loci, where it has a role in re-starting stalled replication forks. The complex initiates homologous recombination (HR) events, used to maintain rDNA copy number, in the rDNA repeats that are processed by a mechanism that requires rad22, but not rhp51. It is also required for suppression of methyl methanesulfonate (MMS) and UV-C irradiation hypersensitivity of the structural maintenance of chromosome (SMC) protein mutant, smc6-74, by overexpression of brc1. Has Holliday junction resolvase activity in vitro. This chain is Structure-specific endonuclease subunit slx1, found in Schizosaccharomyces pombe (strain 972 / ATCC 24843) (Fission yeast).